The sequence spans 1119 residues: Isoleucine--tRNA ligase (1119 aa).

A disordered region spans residues 1 to 43 (MVPRRSRQRPASSCRTAKTARREMPYPLPAPDGQEPEAQPVTP). A 'HIGH' region motif is present at residues 84–94 (PFANGLPHYGH). Positions 676–680 (KVSKS) match the 'KMSKS' region motif. Position 679 (Lys-679) interacts with ATP.

This sequence belongs to the class-I aminoacyl-tRNA synthetase family. IleS type 2 subfamily. As to quaternary structure, monomer. The cofactor is Zn(2+).

It is found in the cytoplasm. It carries out the reaction tRNA(Ile) + L-isoleucine + ATP = L-isoleucyl-tRNA(Ile) + AMP + diphosphate. Catalyzes the attachment of isoleucine to tRNA(Ile). As IleRS can inadvertently accommodate and process structurally similar amino acids such as valine, to avoid such errors it has two additional distinct tRNA(Ile)-dependent editing activities. One activity is designated as 'pretransfer' editing and involves the hydrolysis of activated Val-AMP. The other activity is designated 'posttransfer' editing and involves deacylation of mischarged Val-tRNA(Ile). This Leifsonia xyli subsp. xyli (strain CTCB07) protein is Isoleucine--tRNA ligase.